Consider the following 647-residue polypeptide: Solute carrier family 23 member 2 (647 aa).

Over residues Met-1–Ser-11 the composition is skewed to polar residues. The tract at residues Met-1–Ala-26 is disordered. At Thr-8 to Tyr-109 the chain is on the cytoplasmic side. At Ser-69 the chain carries Phosphoserine. Thr-74 is modified (phosphothreonine). At Ser-77 the chain carries Phosphoserine. A Phosphothreonine modification is found at Thr-78. The residue at position 80 (Ser-80) is a Phosphoserine. The chain crosses the membrane as a helical span at residues Leu-110–Gly-130. The Extracellular segment spans residues Asp-131–Gln-138. A helical membrane pass occupies residues Leu-139 to Cys-159. Arg-160 is a topological domain (cytoplasmic). A helical membrane pass occupies residues Leu-161 to Leu-181. The Extracellular segment spans residues Asp-182–Ala-215. N-linked (GlcNAc...) asparagine glycosylation is found at Asn-187 and Asn-195. The chain crosses the membrane as a helical span at residues Ile-216–Leu-236. Topologically, residues Arg-237–Ala-263 are cytoplasmic. Residues Gly-264–Ser-281 form a helical membrane-spanning segment. Over Gln-282 to Arg-285 the chain is Extracellular. An intramembrane region (helical) is located at residues Asn-286 to Gly-299. The Extracellular portion of the chain corresponds to Trp-300–Gln-306. The helical transmembrane segment at Leu-307–Phe-327 threads the bilayer. Residues Thr-328–Gly-368 are Cytoplasmic-facing. Residues Met-369–Ile-389 form a helical membrane-spanning segment. Residues Glu-390–Arg-414 are Extracellular-facing. The chain crosses the membrane as a helical span at residues Gly-415–Ser-435. At Thr-436–Tyr-458 the chain is on the cytoplasmic side. Residues Gly-459 to Leu-479 form a helical membrane-spanning segment. Residues Pro-480–Pro-482 are Extracellular-facing. The helical transmembrane segment at Val-483–Leu-503 threads the bilayer. Topologically, residues Gln-504–Asn-513 are cytoplasmic. The helical transmembrane segment at Leu-514–Asn-534 threads the bilayer. Residues Pro-535 to Asp-544 lie on the Extracellular side of the membrane. The helical transmembrane segment at Gln-545 to Leu-565 threads the bilayer. At Asp-566–Val-647 the chain is on the cytoplasmic side. Phosphothreonine is present on Thr-646.

Belongs to the nucleobase:cation symporter-2 (NCS2) (TC 2.A.40) family. Interacts with CLSTN3. In terms of processing, phosphorylated. As to expression, highly expressed in neural, neuroendocrine, exocrine and endothelial tissues and in osteoblasts. Detected in neurons throughout the central nervous system, in meninges and choroid plexus, in the anterior pituitary, the intermediate lobe, in pancreas, adrenal cortex, gastric glands, and in the inner nuclear layer of the retina.

It is found in the cell membrane. The enzyme catalyses L-ascorbate(out) + 2 Na(+)(out) = L-ascorbate(in) + 2 Na(+)(in). Functionally, sodium/ascorbate cotransporter. Mediates electrogenic uptake of vitamin C, with a stoichiometry of 2 Na(+) for each ascorbate. The protein is Solute carrier family 23 member 2 (Slc23a2) of Rattus norvegicus (Rat).